A 192-amino-acid polypeptide reads, in one-letter code: uncharacterized protein (192 aa).

Residues 29–160 (RRQAAVLIPV…PLDIYRRGDS (132 aa)) form the Nudix hydrolase domain. The Nudix box motif lies at 67-89 (GAVDSSDASLIAAALREAQEEVA). Positions 83 and 87 each coordinate Mg(2+).

Belongs to the Nudix hydrolase family. PCD1 subfamily. Mn(2+) serves as cofactor. Requires Mg(2+) as cofactor.

In terms of biological role, probably mediates the hydrolysis of some nucleoside diphosphate derivatives. This is an uncharacterized protein from Citrobacter koseri (strain ATCC BAA-895 / CDC 4225-83 / SGSC4696).